We begin with the raw amino-acid sequence, 93 residues long: Small ribosomal subunit protein uS19 (93 aa).

It belongs to the universal ribosomal protein uS19 family.

Its function is as follows. Protein S19 forms a complex with S13 that binds strongly to the 16S ribosomal RNA. The polypeptide is Small ribosomal subunit protein uS19 (Mycobacterium marinum (strain ATCC BAA-535 / M)).